Consider the following 424-residue polypeptide: Tyrosine--tRNA ligase (424 aa).

An L-tyrosine-binding site is contributed by tyrosine 37. The short motif at 42–51 is the 'HIGH' region element; that stretch reads PTADSLHLGH. An N6-acetyllysine modification is found at lysine 144. Residues tyrosine 175 and glutamine 179 each contribute to the L-tyrosine site. Residues 235–239 carry the 'KMSKS' region motif; sequence KFGKT. Lysine 238 is an ATP binding site. Residues 357–414 form the S4 RNA-binding domain; sequence ADLMQALVDSELQPSRGQARKTIASNAITINGEKQSDPEYFFKEEDRLFGRFTLLRRG.

The protein belongs to the class-I aminoacyl-tRNA synthetase family. TyrS type 1 subfamily. Homodimer.

The protein resides in the cytoplasm. It carries out the reaction tRNA(Tyr) + L-tyrosine + ATP = L-tyrosyl-tRNA(Tyr) + AMP + diphosphate + H(+). In terms of biological role, catalyzes the attachment of tyrosine to tRNA(Tyr) in a two-step reaction: tyrosine is first activated by ATP to form Tyr-AMP and then transferred to the acceptor end of tRNA(Tyr). In Shigella boydii serotype 4 (strain Sb227), this protein is Tyrosine--tRNA ligase.